We begin with the raw amino-acid sequence, 210 residues long: Mating-type-like protein A1 (210 aa).

A DNA-binding region (homeobox) is located at residues 141–200 (SKKKRQRLDNSTKEFLEKVFEKNKQPNRRERELIAEKHGVSLSQIRVWFTNKRMRKKEPK).

Belongs to the MATA1 family. In terms of assembly, forms a heterodimer with ALPHA2.

It localises to the nucleus. Mating type proteins are sequence specific DNA-binding proteins that act as master switches in yeast differentiation by controlling gene expression in a cell type-specific fashion. Transcriptional corepressor that acts in conjunction with ALPHA2 to repress transcription both of homozygote-specific genes and of genes necessary for the white-opaque switch, a prerequisite for mating. This is Mating-type-like protein A1 (MTLA1) from Candida albicans (strain SC5314 / ATCC MYA-2876) (Yeast).